The primary structure comprises 744 residues: Receptor-like serine/threonine-protein kinase ALE2 (744 aa).

A signal peptide spans 1–19 (MRNFAMLLLLILLLHSLAS). Residues 20–260 (FPICFARLFP…SQGIGFRTIA (241 aa)) lie on the Extracellular side of the membrane. The span at 59-68 (PAFSPNPSRI) shows a compositional bias: pro residues. Residues 59-79 (PAFSPNPSRIPPLRHKGHHRH) form a disordered region. A compositionally biased stretch (basic residues) spans 70–79 (PLRHKGHHRH). 5 N-linked (GlcNAc...) asparagine glycosylation sites follow: asparagine 87, asparagine 186, asparagine 204, asparagine 243, and asparagine 249. Residues 261–281 (IIALSGFVLILVLVGAISIIV) form a helical membrane-spanning segment. The Cytoplasmic portion of the chain corresponds to 282-744 (KWKKIGKSSN…HLWSGNGDWL (463 aa)). Residues 349–619 (FSAKRVLGEG…GEVVQALKLI (271 aa)) form the Protein kinase domain. ATP is bound by residues 355–363 (LGEGGFGRV) and lysine 377. The Proton acceptor role is filled by aspartate 470. Disordered regions lie at residues 681–705 (EDME…PNRS) and 722–744 (GSMS…GDWL).

It belongs to the protein kinase superfamily. Ser/Thr protein kinase family. In terms of processing, autophosphorylated and phosphorylated by ACR4.

The protein localises to the cell membrane. The catalysed reaction is L-seryl-[protein] + ATP = O-phospho-L-seryl-[protein] + ADP + H(+). The enzyme catalyses L-threonyl-[protein] + ATP = O-phospho-L-threonyl-[protein] + ADP + H(+). Functionally, required during the differentiation of the protoderm into shoots epidermis and cuticle. This is Receptor-like serine/threonine-protein kinase ALE2 (ALE2) from Arabidopsis thaliana (Mouse-ear cress).